The following is a 214-amino-acid chain: MNYPHPIIAREGWPFIAIAAVIALLIHAVGGFGFAWPFWLLLVFVVQFFRDPQRPIPAQPNAVLCPADGRIVAVETAQDPYANREALKISVFMNVFNVHSQRSPVDGAISKVEYFPGAFLNAAIDKASTENERNAVVIQTASGKTVTAVQIAGLVARRILCYVRAGEPLSRGQRYGFIRFGSRVDVYLPLGSRAKVSIGEKVYASSTILAELEQ.

Residue Ser-182 is the Schiff-base intermediate with substrate; via pyruvic acid of the active site. Ser-182 bears the Pyruvic acid (Ser); by autocatalysis mark.

This sequence belongs to the phosphatidylserine decarboxylase family. PSD-A subfamily. In terms of assembly, heterodimer of a large membrane-associated beta subunit and a small pyruvoyl-containing alpha subunit. Pyruvate is required as a cofactor. Is synthesized initially as an inactive proenzyme. Formation of the active enzyme involves a self-maturation process in which the active site pyruvoyl group is generated from an internal serine residue via an autocatalytic post-translational modification. Two non-identical subunits are generated from the proenzyme in this reaction, and the pyruvate is formed at the N-terminus of the alpha chain, which is derived from the carboxyl end of the proenzyme. The post-translation cleavage follows an unusual pathway, termed non-hydrolytic serinolysis, in which the side chain hydroxyl group of the serine supplies its oxygen atom to form the C-terminus of the beta chain, while the remainder of the serine residue undergoes an oxidative deamination to produce ammonia and the pyruvoyl prosthetic group on the alpha chain.

The protein localises to the cell membrane. The enzyme catalyses a 1,2-diacyl-sn-glycero-3-phospho-L-serine + H(+) = a 1,2-diacyl-sn-glycero-3-phosphoethanolamine + CO2. Its pathway is phospholipid metabolism; phosphatidylethanolamine biosynthesis; phosphatidylethanolamine from CDP-diacylglycerol: step 2/2. Its function is as follows. Catalyzes the formation of phosphatidylethanolamine (PtdEtn) from phosphatidylserine (PtdSer). The polypeptide is Phosphatidylserine decarboxylase proenzyme (Burkholderia lata (strain ATCC 17760 / DSM 23089 / LMG 22485 / NCIMB 9086 / R18194 / 383)).